A 303-amino-acid chain; its full sequence is Protein bottleneck (303 aa).

2 disordered regions span residues 102 to 142 (SKRN…PTVT) and 185 to 272 (VATT…ASVR). Composition is skewed to low complexity over residues 115-138 (RQQE…QQQE) and 185-197 (VATT…TANS). The segment covering 260 to 272 (ATISRQSSSASVR) has biased composition (polar residues).

Restricted to the blastoderm.

Its subcellular location is the cytoplasm. The protein localises to the cytoskeleton. Acts as a regulator of the microfilament network governing cellularization of the embryo. Determines the timing of a key conformational transition in the cortical microfilament network: the proper coordination of membrane invagination and basal closure of the cells. To do this, bnk possibly physically links neighboring contractile units of the early cycle 14 microfilament network in a manner that prevents basal constriction until the proper stage has been reached. Bnk together with nullo and Sry-alpha may provide auxiliary functions, by acting both to stabilize a large and dynamic microfilament structure and regulate its functions. The chain is Protein bottleneck (bnk) from Drosophila melanogaster (Fruit fly).